The primary structure comprises 910 residues: Periodic tryptophan protein 2 homolog (910 aa).

14 WD repeats span residues 12–50 (GTVYRDGQVAFSKDGYSVISPIGNKLSIFDLRNNTSKTL), 53–92 (DCNYNIKRLSISPSGYHLLASDERGVVHFVHLLSEFKIYT), 94–134 (RSNK…KVYN), 144–183 (LSSDSLKTIDWSDDANLLVSGGEDRVVRVVGAKDFKNLFI), 188–227 (SHKGYIVNCQFMKNSYDMITVCKRGLANVWTCNLRPGELV), 271–310 (GKSVDVTAARFHKETNILATAFNNGVIVLHEIPSFALVHN), 313–355 (VSEM…YVMK), 358–397 (AHSLRITTAEYSPDGSLMATGAEDGKVKIWNSRSSFCTVT), 400–439 (EHTSGVTAVKWTQSGRAILSASLDGTVRAHDLKRYRNFRT), 443–485 (PEPT…DILS), 486–523 (GHESAISSIDIHGNHIVSGSWDRTIKMWTIVDSQAETV), 525–563 (VSHEALDVKFSPAGDEIAVLTSDGVITFFEAKEMINLGS), 586–625 (AKTKTFTRIRFSPDGNLLLAGGESNNFCLYSVPERMILKK), and 688–728 (RPEV…DPFQ). Residues 867-910 (SKKSVKKEEEEEEDVSDESDDEDIEDESAGSDDEDSDDSVEIIE) are disordered. A compositionally biased stretch (acidic residues) spans 875-910 (EEEEEDVSDESDDEDIEDESAGSDDEDSDDSVEIIE).

Belongs to the WD repeat PWP2 family.

The sequence is that of Periodic tryptophan protein 2 homolog from Caenorhabditis elegans.